The chain runs to 1863 residues: MSQKSWIESTLTKRECVYIIPSSKDPHRCLPGCQICQQLVRCFCGRLVKQHACFTASLAMKYSDVKLGEHFNQAIEEWSVEKHTEQSPTDAYGVINFQGGSHSYRAKYVRLSYDTKPEIILQLLLKEWQMELPKLVISVHGGMQKFELHPRIKQLLGKGLIKAAVTTGAWILTGGVNTGVAKHVGDALKEHASRSSRKICTIGIAPWGVIENRNDLVGRDVVAPYQTLLNPLSKLNVLNNLHSHFILVDDGTVGKYGAEVRLRRELEKTINQQRIHARIGQGVPVVALIFEGGPNVILTVLEYLQESPPVPVVVCEGTGRAADLLAYIHKQTEEGGNLPDAAEPDIISTIKKTFNFGQSEAVHLFQTMMECMKKKELITVFHIGSEDHQDIDVAILTALLKGTNASAFDQLILTLAWDRVDIAKNHVFVYGQQWLVGSLEQAMLDALVMDRVSFVKLLIENGVSMHKFLTIPRLEELYNTKQGPTNPMLFHLIRDVKQGNLPPGYKITLIDIGLVIEYLMGGTYRCTYTRKRFRLIYNSLGGNNRRSGRNTSSSTPQLRKSHETFGNRADKKEKMRHNHFIKTAQPYRPKMDASMEEGKKKRTKDEIVDIDDPETKRFPYPLNELLIWACLMKRQVMARFLWQHGEESMAKALVACKIYRSMAYEAKQSDLVDDTSEELKQYSNDFGQLAVELLEQSFRQDETMAMKLLTYELKNWSNSTCLKLAVSSRLRPFVAHTCTQMLLSDMWMGRLNMRKNSWYKVILSILVPPAILMLEYKTKAEMSHIPQSQDAHQMTMEDSENNFHNITEEIPMEVFKEVKILDSSDGKNEMEIHIKSKKLPITRKFYAFYHAPIVKFWFNTLAYLGFLMLYTFVVLVKMEQLPSVQEWIVIAYIFTYAIEKVREVFMSEAGKISQKIKVWFSDYFNVSDTIAIISFFVGFGLRFGAKWNYINAYDNHVFVAGRLIYCLNIIFWYVRLLDFLAVNQQAGPYVMMIGKMVANMFYIVVIMALVLLSFGVPRKAILYPHEEPSWSLAKDIVFHPYWMIFGEVYAYEIDVCANDSTLPTICGPGTWLTPFLQAVYLFVQYIIMVNLLIAFFNNVYLQVKAISNIVWKYQRYHFIMAYHEKPVLPPPLIILSHIVSLFCCVCKRRKKDKTSDGPKLFLTEEDQKKLHDFEEQCVEMYFDEKDDKFNSGSEERIRVTFERVEQMSIQIKEVGDRVNYIKRSLQSLDSQIGHLQDLSALTVDTLKTLTAQKASEASKVHNEITRELSISKHLAQNLIDDVPVRPLWKKPSAVNTLSSSLPQGDRESNNPFLCNIFMKDEKDPQYNLFGQDLPVIPQRKEFNIPEAGSSCGALFPSAVSPPELRQRRHGVEMLKIFNKNQKLGSSPNSSPHMSSPPTKFSVSTPSQPSCKSHLESTTKDQEPIFYKAAEGDNIEFGAFVGHRDSMDLQRFKETSNKIRELLSNDTPENTLKHVGAAGYSECCKTSTSLHSVQAESCSRRASTEDSPEVDSKAALLPDWLRDRPSNREMPSEGGTLNGLASPFKPVLDTNYYYSAVERNNLMRLSQSIPFVPVPPRGEPVTVYRLEESSPSILNNSMSSWSQLGLCAKIEFLSKEEMGGGLRRAVKVLCTWSEHDILKSGHLYIIKSFLPEVINTWSSIYKEDTVLHLCLREIQQQRAAQKLTFAFNQMKPKSIPYSPRFLEVFLLYCHSAGQWFAVEECMTGEFRKYNNNNGDEIIPTNTLEEIMLAFSHWTYEYTRGELLVLDLQGVGENLTDPSVIKAEEKRSCDMVFGPANLGEDAIKNFRAKHHCNSCCRKLKLPDLKRNDYTPDKIIFPQDESSDLNLQSGNSTKESEATNSVRLML.

Methionine 1 bears the N-acetylmethionine mark. Over 1–850 (MSQKSWIEST…ITRKFYAFYH (850 aa)) the chain is Cytoplasmic. The residue at position 101 (serine 101) is a Phosphoserine. Low complexity predominate over residues 544–555 (NRRSGRNTSSST). The interval 544–574 (NRRSGRNTSSSTPQLRKSHETFGNRADKKEK) is disordered. Basic and acidic residues predominate over residues 560–573 (KSHETFGNRADKKE). A helical membrane pass occupies residues 851–876 (APIVKFWFNTLAYLGFLMLYTFVVLV). The Extracellular segment spans residues 877–882 (KMEQLP). Residues 883-904 (SVQEWIVIAYIFTYAIEKVREV) traverse the membrane as a helical segment. Residues 905 to 923 (FMSEAGKISQKIKVWFSDY) lie on the Cytoplasmic side of the membrane. A helical membrane pass occupies residues 924–943 (FNVSDTIAIISFFVGFGLRF). Over 944-956 (GAKWNYINAYDNH) the chain is Extracellular. Residues 957 to 980 (VFVAGRLIYCLNIIFWYVRLLDFL) traverse the membrane as a helical segment. Residues 981-999 (AVNQQAGPYVMMIGKMVAN) are Cytoplasmic-facing. The chain crosses the membrane as a helical span at residues 1000–1023 (MFYIVVIMALVLLSFGVPRKAILY). Topologically, residues 1024 to 1025 (PH) are extracellular. Positions 1026 to 1066 (EEPSWSLAKDIVFHPYWMIFGEVYAYEIDVCANDSTLPTIC) form an intramembrane region, pore-forming. Residues 1067–1069 (GPG) lie on the Extracellular side of the membrane. The helical transmembrane segment at 1070–1098 (TWLTPFLQAVYLFVQYIIMVNLLIAFFNN) threads the bilayer. The Cytoplasmic portion of the chain corresponds to 1099–1863 (VYLQVKAISN…EATNSVRLML (765 aa)). Residues cysteine 1143, cysteine 1144, and cysteine 1146 are each lipidated (S-palmitoyl cysteine). The residue at position 1163 (threonine 1163) is a Phosphothreonine. Phosphoserine is present on residues serine 1191, serine 1193, serine 1224, serine 1255, and serine 1258. The stretch at 1198-1250 (RVTFERVEQMSIQIKEVGDRVNYIKRSLQSLDSQIGHLQDLSALTVDTLKTLT) forms a coiled coil. At threonine 1265 the chain carries Phosphothreonine. Phosphoserine is present on residues serine 1300, serine 1357, serine 1360, serine 1385, serine 1386, serine 1389, serine 1394, serine 1395, and serine 1403. The disordered stretch occupies residues 1380–1418 (NQKLGSSPNSSPHMSSPPTKFSVSTPSQPSCKSHLESTT). Over residues 1385-1397 (SSPNSSPHMSSPP) the composition is skewed to low complexity. The span at 1398–1410 (TKFSVSTPSQPSC) shows a compositional bias: polar residues. Threonine 1404 carries the phosphothreonine modification. Residues serine 1406 and serine 1445 each carry the phosphoserine modification. Threonine 1454 carries the phosphothreonine modification. Serine 1455 is modified (phosphoserine). A phosphothreonine mark is found at threonine 1466 and threonine 1470. Residues serine 1491, serine 1498, serine 1502, serine 1511, serine 1525, and serine 1531 each carry the phosphoserine modification. The segment at 1498 to 1539 (SRRASTEDSPEVDSKAALLPDWLRDRPSNREMPSEGGTLNGL) is disordered. Over residues 1519–1530 (WLRDRPSNREMP) the composition is skewed to basic and acidic residues. Residue threonine 1535 is modified to Phosphothreonine. A Phosphoserine modification is found at serine 1541. A Phosphothreonine modification is found at threonine 1549. Residues serine 1565 and serine 1567 each carry the phosphoserine modification. Threonine 1581 carries the phosphothreonine modification. Positions 1592-1822 (ILNNSMSSWS…CCRKLKLPDL (231 aa)) constitute an Alpha-type protein kinase domain. Serine 1596 and serine 1613 each carry phosphoserine. ADP is bound by residues glycine 1619, glycine 1620, leucine 1621, arginine 1622, and lysine 1646. Serine 1658 is modified (phosphoserine). Threonine 1683 is subject to Phosphothreonine. Positions 1718, 1719, and 1721 each coordinate ADP. Histidine 1751 is a binding site for Zn(2+). Aspartate 1765 acts as the Proton acceptor in catalysis. Aspartate 1775 provides a ligand contact to ADP. Residue serine 1777 is modified to Phosphoserine. Positions 1808, 1810, and 1814 each coordinate Zn(2+). Phosphothreonine is present on threonine 1828. The tract at residues 1838–1863 (ESSDLNLQSGNSTKESEATNSVRLML) is disordered. Polar residues predominate over residues 1841–1863 (DLNLQSGNSTKESEATNSVRLML). Phosphoserine occurs at positions 1846, 1849, and 1858.

In the C-terminal section; belongs to the protein kinase superfamily. Alpha-type protein kinase family. ALPK subfamily. This sequence in the N-terminal section; belongs to the transient receptor (TC 1.A.4) family. LTrpC subfamily. TRPM7 sub-subfamily. In terms of assembly, homodimer. Homotetramer. Forms heteromers with TRPM6; heteromeric channels are functionally different from the homomeric channels. Interacts with PLCB1. Requires Zn(2+) as cofactor. Post-translationally, palmitoylated; palmitoylation at Cys-1143, Cys-1144 and Cys-1146 promotes TRPM7 trafficking from the Golgi to the surface membrane. Autophosphorylated; autophosphorylation regulates TRPM7 kinase activity towards its substrates. In terms of processing, the C-terminal kinase domain can be cleaved from the channel segment in a cell-type-specific fashion. TRPM7 is cleaved by caspase-8, dissociating the kinase from the ion-conducting pore. The cleaved kinase fragments (M7CKs) can translocate to the cell nucleus and binds chromatin-remodeling complex proteins in a Zn(2+)-dependent manner to ultimately phosphorylate specific Ser/Thr residues of histones. In terms of tissue distribution, found to be expressed in brain and skeletal muscle, with stronger signals in kidney, heart, liver and spleen.

The protein localises to the cell membrane. The protein resides in the cytoplasmic vesicle membrane. It localises to the nucleus. The enzyme catalyses L-seryl-[protein] + ATP = O-phospho-L-seryl-[protein] + ADP + H(+). It catalyses the reaction L-threonyl-[protein] + ATP = O-phospho-L-threonyl-[protein] + ADP + H(+). It carries out the reaction Mg(2+)(in) = Mg(2+)(out). The catalysed reaction is Ca(2+)(in) = Ca(2+)(out). The enzyme catalyses Zn(2+)(in) = Zn(2+)(out). Its activity is regulated as follows. Channel displays constitutive activity. Channel activity is negatively regulated by cytosolic Mg(2+), Mg-ATP and low intracellular pH. Resting free cytosolic Mg(2+) and Mg-ATP concentrations seem to be sufficient to block native TRPM7 channel activity. TRPM7 channel activity is highly dependent on membrane levels of phosphatidylinositol 4,5 bisphosphate (PIP2). PIP2 hydrolysis negatively regulates TRPM7 channel activity. TRPM7 kinase activity does not affect channel activity. The kinase activity is controlled through the autophosphorylation of a serine/threonine-rich region located N-terminal to the catalytic domain. Its function is as follows. Bifunctional protein that combines an ion channel with an intrinsic kinase domain, enabling it to modulate cellular functions either by conducting ions through the pore or by phosphorylating downstream proteins via its kinase domain. The channel is highly permeable to divalent cations, specifically calcium (Ca2+), magnesium (Mg2+) and zinc (Zn2+) and mediates their influx. Controls a wide range of biological processes such as Ca2(+), Mg(2+) and Zn(2+) homeostasis, vesicular Zn(2+) release channel and intracellular Ca(2+) signaling, embryonic development, immune responses, cell motility, proliferation and differentiation. The C-terminal alpha-kinase domain autophosphorylates cytoplasmic residues of TRPM7. TRPM7 phosphorylates SMAD2, suggesting that TRPM7 kinase may play a role in activating SMAD signaling pathways. In vitro, TRPM7 kinase phosphorylates ANXA1 (annexin A1), myosin II isoforms and a variety of proteins with diverse cellular functions. The cleaved channel exhibits substantially higher current and potentiates Fas receptor signaling. Functionally, the C-terminal kinase domain can be cleaved from the channel segment in a cell-type-specific fashion. In immune cells, the TRPM7 kinase domain is clipped from the channel domain by caspases in response to Fas-receptor stimulation. The cleaved kinase fragments can translocate to the nucleus, and bind chromatin-remodeling complex proteins in a Zn(2+)-dependent manner to ultimately phosphorylate specific Ser/Thr residues of histones known to be functionally important for cell differentiation and embryonic development. This Mus musculus (Mouse) protein is Transient receptor potential cation channel subfamily M member 7 (Trpm7).